The primary structure comprises 640 residues: MSSKTPLLDTIASPADTRGLSLAELKQLAAEVRAETIDAVSVTGGHLGAGLGVVELTVALHHVFETPKDIVIWDVGHQAYPHKILTGRRDRIRTLRQGGGLSGFTKRAESEYDPFGAAHAATSISAALGFCAARDAKGEDNSVIAVIGDGSLGAGMAYEAMNAATDTTKRLIVILNDNDMSIAPPVGGMSAYLANLVSGGAYRSVRKLGKTVVEKLPTPMREAARKAEEYARGMVTGGTFFEELGFYYIGPIDGHDMDALVSVLKNAKAFGDKPVLVHCVTQKGKGYAPAEGAADKLHAVVKFDVVTGQQQKAAGGPPSYTKVFAQELIKQAEKDDKIVAITAAMPSGTGLDLFGKAFPERTFDVGIAEQHAVTFAAGMAADGMKPFAAIYSTFLQRGYDQVVHDVAIQGLPVRFAMDRAGLVGADGPTHAGSFDIGFMGALPGMVLMAAADEVELARMVATAAEIDDRPSAFRYPRGEGLGLDMPAIAEPLEIGKGRIVREGTSVAIVSFGTRLSESLKAADLLAARGLSATVCDARFAKPLDLDLLLRLAREHEAIITVEEGSMGGFGAFVLQALAQHGALDRGLKIRTLCLPDVFQDQDKPDAMYAQAGLDAEGILRGALSAMGMDNVSAAGAGRRA.

Thiamine diphosphate contacts are provided by residues H77 and 118–120 (AHA). Mg(2+) is bound at residue D149. Thiamine diphosphate-binding positions include 150 to 151 (GS), N178, Y287, and E369. N178 provides a ligand contact to Mg(2+).

The protein belongs to the transketolase family. DXPS subfamily. As to quaternary structure, homodimer. Requires Mg(2+) as cofactor. Thiamine diphosphate is required as a cofactor.

It catalyses the reaction D-glyceraldehyde 3-phosphate + pyruvate + H(+) = 1-deoxy-D-xylulose 5-phosphate + CO2. The protein operates within metabolic intermediate biosynthesis; 1-deoxy-D-xylulose 5-phosphate biosynthesis; 1-deoxy-D-xylulose 5-phosphate from D-glyceraldehyde 3-phosphate and pyruvate: step 1/1. Catalyzes the acyloin condensation reaction between C atoms 2 and 3 of pyruvate and glyceraldehyde 3-phosphate to yield 1-deoxy-D-xylulose-5-phosphate (DXP). This is 1-deoxy-D-xylulose-5-phosphate synthase from Caulobacter vibrioides (strain NA1000 / CB15N) (Caulobacter crescentus).